Here is a 503-residue protein sequence, read N- to C-terminus: Cytochrome P450 11B1, mitochondrial (503 aa).

The transit peptide at 1–24 (MALWAKARVWMAGPWLSLHRARPL) directs the protein to the mitochondrion. Cys-450 contributes to the heme binding site.

It belongs to the cytochrome P450 family. Requires heme as cofactor.

It is found in the mitochondrion inner membrane. The catalysed reaction is a steroid + 2 reduced [adrenodoxin] + O2 + 2 H(+) = an 11beta-hydroxysteroid + 2 oxidized [adrenodoxin] + H2O. It catalyses the reaction 11-deoxycortisol + 2 reduced [adrenodoxin] + O2 + 2 H(+) = cortisol + 2 oxidized [adrenodoxin] + H2O. The enzyme catalyses 21-hydroxyprogesterone + 2 reduced [adrenodoxin] + O2 + 2 H(+) = corticosterone + 2 oxidized [adrenodoxin] + H2O. It carries out the reaction corticosterone + 2 reduced [adrenodoxin] + O2 + 2 H(+) = 18-hydroxycorticosterone + 2 oxidized [adrenodoxin] + H2O. The catalysed reaction is 18-hydroxycorticosterone + 2 reduced [adrenodoxin] + O2 + 2 H(+) = aldosterone + 2 oxidized [adrenodoxin] + 2 H2O. It catalyses the reaction 21-hydroxyprogesterone + 2 reduced [adrenodoxin] + O2 + 2 H(+) = 19-hydroxy-11-deoxycorticosterone + 2 oxidized [adrenodoxin] + H2O. The enzyme catalyses 19-hydroxy-11-deoxycorticosterone + 2 reduced [adrenodoxin] + O2 + 2 H(+) = 19-oxo-11-deoxycorticosterone + 2 oxidized [adrenodoxin] + 2 H2O. The protein operates within steroid biosynthesis; glucocorticoid biosynthesis. Its pathway is steroid hormone biosynthesis. Its function is as follows. A cytochrome P450 monooxygenase that catalyzes the biosynthesis of aldosterone and other adrenal corticoids. Differing from other species (such as human, rat and mice), it is able to catalyze three sequential oxidative reactions of 11-deoxycorticosterone (21-hydroxyprogesterone), namely 11-beta hydroxylation, followed by two successive oxidations at C18 yielding 18-hydroxy and then 18-oxo intermediates, and ending with the formation of aldosterone. Steroid 11beta, 18- and 19-hydroxylase. Mechanistically, uses molecular oxygen inserting one oxygen atom into a substrate and reducing the second into a water molecule. Two electrons are provided by NADPH via a two-protein mitochondrial transfer system comprising flavoprotein FDXR (adrenodoxin/ferredoxin reductase) and nonheme iron-sulfur protein FDX1 or FDX2 (adrenodoxin/ferredoxin). The chain is Cytochrome P450 11B1, mitochondrial (CYP11B1) from Ovis aries (Sheep).